The chain runs to 157 residues: MGFPKVERLLINYKTLDEFKKFKGCGAQELSMLEELQANIIENDSESPFYGIYYGGSLIARMSLYMKRNGGEPFEITGTYLELYKLEVLPTFQKQGFGQMLVNYAKQLQFPIKTIARIQSSGFWDKLSFQPVSVTDGDFYIWHPETNSNAITNEESA.

The 146-residue stretch at 9-154 (LLINYKTLDE…ETNSNAITNE (146 aa)) folds into the N-acetyltransferase domain.

This is an uncharacterized protein from Bacillus mycoides (strain KBAB4) (Bacillus weihenstephanensis).